The chain runs to 401 residues: Coenzyme A biosynthesis bifunctional protein CoaBC (401 aa).

Positions 1 to 190 are phosphopantothenoylcysteine decarboxylase; the sequence is MQTLAGKKIL…FQPKPLQDKS (190 aa). Cys-159 (proton donor) is an active-site residue. The interval 191–401 is phosphopantothenate--cysteine ligase; sequence ILITAGPTRE…LKQIQTLMGH (211 aa). Residues Asp-279, Lys-289, 307 to 310, Phe-326, Lys-340, and Lys-344 each bind CTP; that span reads PDIV.

The protein in the N-terminal section; belongs to the HFCD (homo-oligomeric flavin containing Cys decarboxylase) superfamily. In the C-terminal section; belongs to the PPC synthetase family. The cofactor is Mg(2+). FMN serves as cofactor.

It carries out the reaction N-[(R)-4-phosphopantothenoyl]-L-cysteine + H(+) = (R)-4'-phosphopantetheine + CO2. The enzyme catalyses (R)-4'-phosphopantothenate + L-cysteine + CTP = N-[(R)-4-phosphopantothenoyl]-L-cysteine + CMP + diphosphate + H(+). Its pathway is cofactor biosynthesis; coenzyme A biosynthesis; CoA from (R)-pantothenate: step 2/5. It participates in cofactor biosynthesis; coenzyme A biosynthesis; CoA from (R)-pantothenate: step 3/5. Catalyzes two sequential steps in the biosynthesis of coenzyme A. In the first step cysteine is conjugated to 4'-phosphopantothenate to form 4-phosphopantothenoylcysteine. In the second step the latter compound is decarboxylated to form 4'-phosphopantotheine. The sequence is that of Coenzyme A biosynthesis bifunctional protein CoaBC from Vibrio vulnificus (strain YJ016).